The sequence spans 228 residues: Probable septum site-determining protein MinC (228 aa).

It belongs to the MinC family. Interacts with MinD and FtsZ.

In terms of biological role, cell division inhibitor that blocks the formation of polar Z ring septums. Rapidly oscillates between the poles of the cell to destabilize FtsZ filaments that have formed before they mature into polar Z rings. Prevents FtsZ polymerization. This Symbiobacterium thermophilum (strain DSM 24528 / JCM 14929 / IAM 14863 / T) protein is Probable septum site-determining protein MinC.